A 106-amino-acid polypeptide reads, in one-letter code: Nucleoid-associated protein bll8115 (106 aa).

This sequence belongs to the YbaB/EbfC family. As to quaternary structure, homodimer.

It is found in the cytoplasm. The protein localises to the nucleoid. Functionally, binds to DNA and alters its conformation. May be involved in regulation of gene expression, nucleoid organization and DNA protection. The protein is Nucleoid-associated protein bll8115 of Bradyrhizobium diazoefficiens (strain JCM 10833 / BCRC 13528 / IAM 13628 / NBRC 14792 / USDA 110).